The sequence spans 125 residues: Large ribosomal subunit protein bL12 (125 aa).

This sequence belongs to the bacterial ribosomal protein bL12 family. As to quaternary structure, homodimer. Part of the ribosomal stalk of the 50S ribosomal subunit. Forms a multimeric L10(L12)X complex, where L10 forms an elongated spine to which 2 to 4 L12 dimers bind in a sequential fashion. Binds GTP-bound translation factors.

Its function is as follows. Forms part of the ribosomal stalk which helps the ribosome interact with GTP-bound translation factors. Is thus essential for accurate translation. The chain is Large ribosomal subunit protein bL12 from Rhizobium johnstonii (strain DSM 114642 / LMG 32736 / 3841) (Rhizobium leguminosarum bv. viciae).